Consider the following 1438-residue polypeptide: DNA polymerase III PolC-type (1438 aa).

Positions 422-578 (YVVFDVETTG…YDTESTAYIF (157 aa)) constitute an Exonuclease domain.

The protein belongs to the DNA polymerase type-C family. PolC subfamily.

The protein resides in the cytoplasm. The catalysed reaction is DNA(n) + a 2'-deoxyribonucleoside 5'-triphosphate = DNA(n+1) + diphosphate. Functionally, required for replicative DNA synthesis. This DNA polymerase also exhibits 3' to 5' exonuclease activity. The chain is DNA polymerase III PolC-type from Staphylococcus haemolyticus (strain JCSC1435).